A 373-amino-acid polypeptide reads, in one-letter code: MTGWSCLVTGAGGFLGQRIIRLLVKEKELKEIRVLDKAFGPELREEFSKLQNKTKLTVLEGDILDEPFLKRACQDVSVIIHTACIIDVFGVTHRESIMNVNVKGTQLLLEACVQASVPVFIYTSSIEVAGPNSYKEIIQNGHEEEPLENTWPAPYPHSKKLAEKAVLAANGWNLKNGGTLYTCALRPMYIYGEGSRFLSASINEALNNNGILSSVGKFSTVNPVYVGNVAWAHILALRALQDPKKAPSIRGQFYYISDDTPHQSYDNLNYTLSKEFGLRLDSRWSFPLSLMYWIGFLLEIVSFLLRPIYTYRPPFNRHIVTLSNSVFTFSYKKAQRDLAYKPLYSWEEAKQKTVEWVGSLVDRHKETLKSKTQ.

NADP(+) contacts are provided by residues 10-15 (GAGGFL), tyrosine 155, and lysine 159. The active-site Proton donor is the lysine 159. A helical transmembrane segment spans residues 288–308 (LSLMYWIGFLLEIVSFLLRPI).

Belongs to the 3-beta-HSD family. In terms of tissue distribution, placenta and skin. Predominantly expressed in mammary gland tissue.

It is found in the endoplasmic reticulum membrane. The protein resides in the mitochondrion membrane. The enzyme catalyses a 3beta-hydroxy-Delta(5)-steroid + NAD(+) = a 3-oxo-Delta(5)-steroid + NADH + H(+). It carries out the reaction pregnenolone + NAD(+) = pregn-5-ene-3,20-dione + NADH + H(+). It catalyses the reaction 3beta-hydroxyandrost-5-en-17-one + NAD(+) = androst-5-ene-3,17-dione + NADH + H(+). The catalysed reaction is androst-5-en-3beta,17beta-diol + NAD(+) = 17beta-hydroxy-androst-5-en-3-one + NADH + H(+). The enzyme catalyses a 3beta-hydroxysteroid + NADP(+) = a 3-oxosteroid + NADPH + H(+). It carries out the reaction 5alpha-androstane-3beta,17beta-diol + NADP(+) = 17beta-hydroxy-5alpha-androstan-3-one + NADPH + H(+). It catalyses the reaction 3beta-hydroxy-5alpha-androstan-17-one + NADP(+) = 5alpha-androstan-3,17-dione + NADPH + H(+). The catalysed reaction is a 3-oxo-Delta(5)-steroid = a 3-oxo-Delta(4)-steroid. The enzyme catalyses pregn-5-ene-3,20-dione = progesterone. It carries out the reaction androst-5-ene-3,17-dione = androst-4-ene-3,17-dione. It catalyses the reaction 17beta-hydroxy-androst-5-en-3-one = testosterone. The catalysed reaction is 5alpha-androstane-3beta,17beta-diol + NAD(+) = 17beta-hydroxy-5alpha-androstan-3-one + NADH + H(+). It functions in the pathway steroid hormone biosynthesis. It participates in steroid metabolism. A bifunctional enzyme responsible for the oxidation and isomerization of 3beta-hydroxy-Delta(5)-steroid precursors to 3-oxo-Delta(4)-steroids, an essential step in steroid hormone biosynthesis. Specifically catalyzes the conversion of pregnenolone to progesterone, 17alpha-hydroxypregnenolone to 17alpha-hydroxyprogesterone, dehydroepiandrosterone (DHEA) to 4-androstenedione, and androstenediol to testosterone. Additionally, catalyzes the interconversion between 3beta-hydroxy and 3-oxo-5alpha-androstane steroids controlling the bioavalability of the active forms. Specifically converts dihydrotestosterone to its inactive form 5alpha-androstanediol, that does not bind androgen receptor/AR. Also converts androstanedione, a precursor of testosterone and estrone, to epiandrosterone. Expected to use NAD(+) as preferred electron donor for the 3beta-hydroxy-steroid dehydrogenase activity and NADPH for the 3-ketosteroid reductase activity. This chain is 3 beta-hydroxysteroid dehydrogenase/Delta 5--&gt;4-isomerase type 1, found in Homo sapiens (Human).